We begin with the raw amino-acid sequence, 245 residues long: Polyhedrin (245 aa).

Belongs to the polyhedrin family.

Its function is as follows. Major component of the virus occlusion bodies, which are large proteinaceous structures (polyhedra), that protect the virus from the outside environment for extended periods until they are ingested by insect larvae. This Hyphantria cunea nuclear polyhedrosis virus (HcNPV) protein is Polyhedrin (PH).